A 444-amino-acid polypeptide reads, in one-letter code: ATP-dependent RNA helicase SrmB (444 aa).

The Q motif motif lies at 4 to 32 (TTFSELELDESLLEALQDKGFTRPTAIQA). In terms of domain architecture, Helicase ATP-binding spans 35–209 (IPPALDGRDV…AERLLEDPVE (175 aa)). 48–55 (APTGTGKT) lines the ATP pocket. A DEAD box motif is present at residues 157–160 (DEAD). In terms of domain architecture, Helicase C-terminal spans 238-387 (LLVHLLKQPE…ELRPKTRAPS (150 aa)). Over residues 382–391 (KTRAPSEKQT) the composition is skewed to basic and acidic residues. The segment at 382-444 (KTRAPSEKQT…TGVPPQTTEE (63 aa)) is disordered. 2 stretches are compositionally biased toward basic residues: residues 394–406 (PSKK…AEKK) and 414–432 (PRVK…RRKP).

This sequence belongs to the DEAD box helicase family. SrmB subfamily. Interacts with the 50S ribosomal subunit. Forms a complex with the 50S ribosomal proteins L4 and L24, and a region near the 5'-end of 23S rRNA.

Its subcellular location is the cytoplasm. It carries out the reaction ATP + H2O = ADP + phosphate + H(+). In terms of biological role, DEAD-box RNA helicase involved in the assembly of the 50S ribosomal subunit at low temperature. Exhibits RNA-stimulated ATP hydrolysis and RNA unwinding activity. Acts before DeaD. This chain is ATP-dependent RNA helicase SrmB, found in Escherichia coli (strain K12).